The following is a 410-amino-acid chain: Argininosuccinate synthase (410 aa).

8–16 (AYSGGLDTS) contributes to the ATP binding site. Residue Y86 participates in L-citrulline binding. Residue G116 coordinates ATP. 3 residues coordinate L-aspartate: T118, N122, and D123. N122 is a binding site for L-citrulline. 4 residues coordinate L-citrulline: R126, S174, E259, and Y271.

It belongs to the argininosuccinate synthase family. Type 1 subfamily. In terms of assembly, homotetramer.

Its subcellular location is the cytoplasm. The enzyme catalyses L-citrulline + L-aspartate + ATP = 2-(N(omega)-L-arginino)succinate + AMP + diphosphate + H(+). Its pathway is amino-acid biosynthesis; L-arginine biosynthesis; L-arginine from L-ornithine and carbamoyl phosphate: step 2/3. The chain is Argininosuccinate synthase from Leuconostoc citreum (strain KM20).